We begin with the raw amino-acid sequence, 451 residues long: MSNVIENLGKLDRKVTLAIPKAEVEKEKQDRLVRLSKTVKMSGFRPGKVPMKMVEKQYGQQVEFEVRFDKAARKFFDITKEQDVKVAGQPKFEIKTEGVGEDEVAFDATFEVYPEVKLGDLTGAEVTRTKTEITDAEIDKTIDILRKQRVHYHVRGEAGEHGDGGGDVTAQNGDRVTLDFVGKIEGVEFAGGKAEDFPFVLGEGRMLPEFEAATLGLKVGESKSFPLSFPADYHGKDVAGKTAEFTVTLKKIEWAHLPEVNDAFAKSLGIADGNVDKMRADIRENLEREVKRRTHAMLKDQVMEALLKVSELDVPKALIEQDQERLVEMARRDLEQRGMPNAKDMPIPAEMFAQQAERRVKLGLILAEIVKAHGLEAKADQIKAEIEDFAKSYEDPKEVMRWYYGDQQRLAEMEAYVLENNVVNFVCDKAKVTDKSVSFEELTAEGNAQQA.

The PPIase FKBP-type domain occupies 173 to 258; the sequence is GDRVTLDFVG…LKKIEWAHLP (86 aa).

The protein belongs to the FKBP-type PPIase family. Tig subfamily.

It is found in the cytoplasm. It catalyses the reaction [protein]-peptidylproline (omega=180) = [protein]-peptidylproline (omega=0). Its function is as follows. Involved in protein export. Acts as a chaperone by maintaining the newly synthesized protein in an open conformation. Functions as a peptidyl-prolyl cis-trans isomerase. The polypeptide is Trigger factor (Cupriavidus pinatubonensis (strain JMP 134 / LMG 1197) (Cupriavidus necator (strain JMP 134))).